A 146-amino-acid polypeptide reads, in one-letter code: Ribonuclease H (146 aa).

The RNase H type-1 domain occupies 1–142 (MNKIIIYTDG…ADALANLAMD (142 aa)). Mg(2+) is bound by residues aspartate 9, glutamate 47, aspartate 70, and aspartate 134.

This sequence belongs to the RNase H family. As to quaternary structure, monomer. It depends on Mg(2+) as a cofactor.

Its subcellular location is the cytoplasm. It carries out the reaction Endonucleolytic cleavage to 5'-phosphomonoester.. Functionally, endonuclease that specifically degrades the RNA of RNA-DNA hybrids. The chain is Ribonuclease H from Ruthia magnifica subsp. Calyptogena magnifica.